Reading from the N-terminus, the 1277-residue chain is MARRSQSSSQGENPLDPNYLPPHYKEYYRIAIDALAENGPEAYEQFLMEEGAPDFLCPNEVEHISRSLQRPPESGQENPYPDSVYGSQEDADGSSGTYWPMDSDTAAPELDLGWPTIYGFQGTEVTTLMHPPPPDNPTIKEEVRRMIRSAQQVIGIVMDIFTDADILSELLDAANRRIPVYIILDQMNCQLFLDMAAKYRVNLNYVEFLRVRTVSGPTYFCRKGSTFKGNLQEKFLLVDCTMVLSGTYSFMWSFEKIHRSIAHIFQGELVSSFDEEFRILFAQSDPLIPSESALAKMDKSYMGMVPFAGPRPMFDRKLHFMFPREENPSQQFPSYGVDPDRHYFQPFRREDMIRQTMDPGGMRMYGKNLGDPMDKMQMSFVQNKQLEAMEAFKRHSFAEGTFENYTSSRQYSRQMFMNNNDEYRLQSSQVQKSQFMQFQSPLGTARPQGLFEKIRGGRQGLQEMDEFDSRYPTKGLPGEGHFALDGPPMRPGYNPSNSSREVRHGSDQMVIGGEGRFGQRSLGRQKFMCQISPTQKQGMEPKYFFHDQDADKKPQENKQGLRSWRISSYLSGIQSDQDEEGLPIPLDPELYDDALVPVERAVPASDTLFKYSMDPVPPYHPGTAPHDLPYDRANENPMKFSMDPVQLHRPNVPSQDVPMHLERAGNESLVKYSLDPIPPFKPNVAGTDVPMPLERKPTANEILSRYSVDPIPPYKTFGSTGDLSVEKAKENPPAEKEKEEGLLSRHDSFRTRTNPLIQRGSRLRSSLIFSSSKLEQHTSTAESVQEMQKEQSTSELVSENETGRTTSKVAEILQKYRGINKDANSTTVTQAKAASRTIHEESEDGQSVSAEEVAYKAVESTVDTKGSMSHVQQESQYRSVASSHLESLLGKHQTTLSMSKVEQMTSSIQTIGNISAAPSESGPTVPELSEVHKQSSISHMQQESHYKSVVTSKLEGLLNRDQQVMSMSKVEQTSSTIQTIGNISPAPPDSKESGPTITEVTEATQSSENLPTRPNSAFHFGSALESMSQNPTPSSSLNKSEEDLAKTDQNFFRKGSMRLKQFLQSKAEKKAEEDLASDNAKAEKQHSTLRRLSKSDSQEVAASTDMEEKSAKSLSVSPPKTSSISQSRLSASTSNVIFSSNLRDDTKVILEQISANSQKNRAEMVKQAQQIQATGDPDPATSKPESKTEGTASTDAAAITRTGSFLSRSRFSRPSPSSPEDRDILLKRMESIRKEKRVYSRFEVFCKKDEQPSHADDNDDKKAGKIIPKLLGNLIKK.

A compositionally biased stretch (polar residues) spans 1-12 (MARRSQSSSQGE). 8 disordered regions span residues 1 to 20 (MARR…PNYL), 67 to 98 (SLQR…SGTY), 717 to 756 (FGST…TNPL), 772 to 805 (SKLE…TGRT), 971 to 1018 (EQTS…NSAF), 1070 to 1130 (KAEE…SRLS), 1158 to 1225 (QKNR…RDIL), and 1247 to 1266 (KKDE…AGKI). A compositionally biased stretch (basic and acidic residues) spans 724–750 (SVEKAKENPPAEKEKEEGLLSRHDSFR). Composition is skewed to polar residues over residues 777-805 (HTST…TGRT), 971-982 (EQTSSTIQTIGN), 993-1015 (SGPT…TRPN), and 1112-1130 (KSLS…SRLS). The span at 1204 to 1215 (SFLSRSRFSRPS) shows a compositional bias: low complexity. The segment covering 1247-1263 (KKDEQPSHADDNDDKKA) has biased composition (basic and acidic residues).

The protein belongs to the FAM83 family.

The protein resides in the cytoplasm. It localises to the cytoskeleton. In terms of biological role, may play a role in keratin cytoskeleton disassembly. The sequence is that of Protein FAM83H from Xenopus tropicalis (Western clawed frog).